The sequence spans 838 residues: 1,4-alpha-glucan branching enzyme GlgB 1 (838 aa).

The span at methionine 1–alanine 11 shows a compositional bias: basic and acidic residues. 2 disordered regions span residues methionine 1–lysine 98 and proline 116–glycine 142. Over residues lysine 29–lysine 57 the composition is skewed to low complexity. The active-site Nucleophile is aspartate 513. Catalysis depends on glutamate 566, which acts as the Proton donor. Residues threonine 793–serine 822 form a disordered region.

It belongs to the glycosyl hydrolase 13 family. GlgB subfamily. Monomer.

The enzyme catalyses Transfers a segment of a (1-&gt;4)-alpha-D-glucan chain to a primary hydroxy group in a similar glucan chain.. The protein operates within glycan biosynthesis; glycogen biosynthesis. Its function is as follows. Catalyzes the formation of the alpha-1,6-glucosidic linkages in glycogen by scission of a 1,4-alpha-linked oligosaccharide from growing alpha-1,4-glucan chains and the subsequent attachment of the oligosaccharide to the alpha-1,6 position. This is 1,4-alpha-glucan branching enzyme GlgB 1 from Streptomyces avermitilis (strain ATCC 31267 / DSM 46492 / JCM 5070 / NBRC 14893 / NCIMB 12804 / NRRL 8165 / MA-4680).